The sequence spans 82 residues: Translational regulator CsrA (82 aa).

The protein belongs to the CsrA/RsmA family. Homodimer; the beta-strands of each monomer intercalate to form a hydrophobic core, while the alpha-helices form wings that extend away from the core.

It localises to the cytoplasm. A translational regulator that binds mRNA to regulate translation initiation and/or mRNA stability. Usually binds in the 5'-UTR at or near the Shine-Dalgarno sequence preventing ribosome-binding, thus repressing translation. Its main target seems to be the major flagellin gene, while its function is anatagonized by FliW. The sequence is that of Translational regulator CsrA from Brachyspira hyodysenteriae (strain ATCC 49526 / WA1).